The sequence spans 1239 residues: Anillin (1239 aa).

4 disordered regions span residues C32 to G67, E230 to Q265, F493 to G621, and G684 to S716. The segment covering R53 to A63 has biased composition (low complexity). The interaction with and bundling of F-actin stretch occupies residues E126–Q371. The segment covering P252–Q265 has biased composition (basic and acidic residues). The segment covering S500–R518 has biased composition (low complexity). The span at P519–I528 shows a compositional bias: pro residues. Residues E551 to R563 are compositionally biased toward basic and acidic residues. Acidic residues predominate over residues D594 to Q610. The span at A699 to S716 shows a compositional bias: polar residues. S712 is subject to Phosphoserine. Position 740 is a phosphothreonine (T740). Residues S744 and S754 each carry the phosphoserine modification. T831 bears the Phosphothreonine mark. Positions D834–V861 form a coiled coil. The region spanning S1106–T1230 is the PH domain.

As to quaternary structure, interacts with and bundles F-actin. As to expression, accumulates in the ring canals that interconnect cells of the germline cysts in males and the ovarian follicles in females. These structures develop from arrested contractile rings after a specialized cytokinesis in which the closing of the invaginating plasma membrane is incomplete. Also concentrates in the arrested cleavage furrows that initially link the oocyte to its 15 nurse cells in the early egg chamber and is subsequently lost from these furrows as germline cell division is completed.

The protein resides in the nucleus. Its subcellular location is the cytoplasm. It localises to the cytoskeleton. It is found in the cell cortex. The protein localises to the cell projection. The protein resides in the cilium. Its subcellular location is the flagellum. Functionally, required for cytokinesis. Essential for the structural integrity of the cleavage furrow and for completion of cleavage furrow ingression and proper formation of the midbody. Required during cellularization of syncytial embryos for the proper formation and function of the furrow canals, the stable inward folds of the plasma membrane which separate the peripheral nuclei. Also required for the formation of the pole cells, the progenitors of the adult germline which are formed by cytokinesis of the cytoplasmic buds at the posterior pole of the syncytial embryo. Essential for embryonic viability. The protein is Anillin (scra) of Drosophila melanogaster (Fruit fly).